The following is a 544-amino-acid chain: Chaperonin GroEL (544 aa).

ATP is bound by residues 30-33 (TLGP), Lys-51, 87-91 (DGTTT), Gly-415, and Asp-495.

This sequence belongs to the chaperonin (HSP60) family. Forms a cylinder of 14 subunits composed of two heptameric rings stacked back-to-back. Interacts with the co-chaperonin GroES.

The protein resides in the cytoplasm. The enzyme catalyses ATP + H2O + a folded polypeptide = ADP + phosphate + an unfolded polypeptide.. Functionally, together with its co-chaperonin GroES, plays an essential role in assisting protein folding. The GroEL-GroES system forms a nano-cage that allows encapsulation of the non-native substrate proteins and provides a physical environment optimized to promote and accelerate protein folding. The sequence is that of Chaperonin GroEL from Bartonella bacilliformis.